The sequence spans 57 residues: Large ribosomal subunit protein bL32 (57 aa).

Residues 1–19 show a composition bias toward basic residues; that stretch reads MAVPKRRMSRANTRSRRAQ. The disordered stretch occupies residues 1-20; that stretch reads MAVPKRRMSRANTRSRRAQW.

It belongs to the bacterial ribosomal protein bL32 family.

The protein is Large ribosomal subunit protein bL32 of Mycobacterium avium (strain 104).